The sequence spans 258 residues: Peptide methionine sulfoxide reductase A4, chloroplastic (258 aa).

Residues 1–53 constitute a chloroplast transit peptide; it reads MQVLVVSPPLIAAASLSKPLNSLSKAALSFSRAKPICPFPQTSRRPISVYKSP. Position 54 is an N-acetylmethionine (methionine 54). The tract at residues 62–89 is disordered; the sequence is GFGSRPQAQADPSSAAIAQGPDDDVPSS. Position 245 is a phosphoserine (serine 245).

It belongs to the MsrA Met sulfoxide reductase family. In terms of tissue distribution, expressed in rosette and cauline leaves, and at lower levels in stems and flowers (at protein level).

Its subcellular location is the plastid. The protein resides in the chloroplast stroma. It carries out the reaction L-methionyl-[protein] + [thioredoxin]-disulfide + H2O = L-methionyl-(S)-S-oxide-[protein] + [thioredoxin]-dithiol. The catalysed reaction is [thioredoxin]-disulfide + L-methionine + H2O = L-methionine (S)-S-oxide + [thioredoxin]-dithiol. Its function is as follows. Catalyzes the reduction of methionine sulfoxide (MetSO) to methionine in proteins. Plays a protective role against oxidative stress by restoring activity to proteins that have been inactivated by methionine oxidation. Prevents the methionine sulfoxidation of the heat shock protein HSP21 and its subsequent inactivation. MSRA family specifically reduces the MetSO S-enantiomer. The protein is Peptide methionine sulfoxide reductase A4, chloroplastic (MSR4) of Arabidopsis thaliana (Mouse-ear cress).